The sequence spans 361 residues: DNA-(apurinic or apyrimidinic site) endonuclease (361 aa).

The segment at 1–90 (MTSRTKKLKM…TNKTTASVSI (90 aa)) is disordered. Residues 25 to 39 (TSEEEKEEVEEEEEE) are compositionally biased toward acidic residues. The short motif at 41–44 (KKRK) is the Nuclear localization signal element. The span at 43-64 (RKLVKKTPAKKAPAKKAAAKKK) shows a compositional bias: basic residues. The span at 68 to 80 (EDEDEEEKEEEEE) shows a compositional bias: acidic residues. Residue glutamate 139 coordinates Mg(2+). Residue tyrosine 211 is part of the active site. The Mg(2+) site is built by aspartate 252, asparagine 254, and aspartate 350. The Proton donor/acceptor role is filled by aspartate 252.

It belongs to the DNA repair enzymes AP/ExoA family. It depends on Mg(2+) as a cofactor. Requires Mn(2+) as cofactor.

The protein localises to the nucleus. The sequence is that of DNA-(apurinic or apyrimidinic site) endonuclease (apeA) from Dictyostelium discoideum (Social amoeba).